The chain runs to 602 residues: Pro-neuregulin-1, membrane-bound isoform (602 aa).

Residues 1 to 206 (MWATSEGPLQ…MEAEELYQKR (206 aa)) lie on the Extracellular side of the membrane. N21 carries an N-linked (GlcNAc...) asparagine glycan. In terms of domain architecture, Ig-like C2-type spans 29–123 (PKLKEMKNQE…DSTKASVIIT (95 aa)). Residues C49 and C105 are joined by a disulfide bond. N113 and N126 each carry an N-linked (GlcNAc...) asparagine glycan. The region spanning 137 to 181 (HLTKCDIKQKAFCVNGGECYMVKDLPNPPRYLCRCPNEFTGDRCQ) is the EGF-like domain. Cystine bridges form between C141–C155, C149–C169, and C171–C180. The helical transmembrane segment at 207–229 (VLTITGICIALLVVGIMCVVAYC) threads the bilayer. Over 230-602 (KTKKQRKKLH…VIANQDPIAV (373 aa)) the chain is Cytoplasmic. Disordered stretches follow at residues 293–366 (ETSF…EGNS), 391–421 (MTTPARMSPVDFHTPTSPKSPPSEMSPPVSS), 460–479 (FNSFHNNPTHESNSLPPSPL), and 486–553 (EYET…FLSI). Residues 294–314 (TSFSTSHYTSTTHHSMTVTQT) show a composition bias toward low complexity. Over residues 315 to 324 (PSHSWSNGHT) the composition is skewed to polar residues. A compositionally biased stretch (low complexity) spans 325 to 341 (ESILSESHSVLVSSSVE). Residues 460 to 474 (FNSFHNNPTHESNSL) are compositionally biased toward polar residues. Basic residues predominate over residues 504–514 (TNSRRVKRTKP). The span at 527–536 (DTSSQSTSSE) shows a compositional bias: low complexity.

This sequence belongs to the neuregulin family. Post-translationally, proteolytic cleavage close to the plasma membrane on the external face leads to the release of the soluble growth factor form. Extensive glycosylation precedes the proteolytic cleavage.

Its subcellular location is the cell membrane. It localises to the secreted. In terms of biological role, direct ligand for the ERBB tyrosine kinase receptors. The multiple isoforms perform diverse functions: cysteine-rich domain containing isoforms (isoform 2-isoform 4) probably regulate the expression of nicotinic acetylcholine receptors at developing interneuronal synapses. Isoform Ig-NRG is required for the initial induction and/or maintenance of the mature levels of acetylcholine receptors at neuromuscular synapses. Binds to ERBB3 and integrins to form a complex which is essential for NRG1-ERBB signaling. The protein is Pro-neuregulin-1, membrane-bound isoform (NRG1) of Gallus gallus (Chicken).